A 328-amino-acid chain; its full sequence is Aspartate carbamoyltransferase catalytic subunit (328 aa).

Carbamoyl phosphate-binding residues include arginine 70 and threonine 71. Position 98 (lysine 98) interacts with L-aspartate. 3 residues coordinate carbamoyl phosphate: arginine 120, histidine 150, and glutamine 153. L-aspartate-binding residues include arginine 183 and arginine 238. Positions 279 and 280 each coordinate carbamoyl phosphate.

It belongs to the aspartate/ornithine carbamoyltransferase superfamily. ATCase family. As to quaternary structure, heterododecamer (2C3:3R2) of six catalytic PyrB chains organized as two trimers (C3), and six regulatory PyrI chains organized as three dimers (R2).

It catalyses the reaction carbamoyl phosphate + L-aspartate = N-carbamoyl-L-aspartate + phosphate + H(+). Its pathway is pyrimidine metabolism; UMP biosynthesis via de novo pathway; (S)-dihydroorotate from bicarbonate: step 2/3. Functionally, catalyzes the condensation of carbamoyl phosphate and aspartate to form carbamoyl aspartate and inorganic phosphate, the committed step in the de novo pyrimidine nucleotide biosynthesis pathway. This Methylococcus capsulatus (strain ATCC 33009 / NCIMB 11132 / Bath) protein is Aspartate carbamoyltransferase catalytic subunit.